The sequence spans 624 residues: MALWGGRFSQAADTRFKQFNDSLRIDYRLAEQDIVGSIAWSKALLSVGVITELEQQKLELALNELKLEVMEDPEQILLSDAEDIHSWVETQLIGKVGDLGKKLHTGRSRNDQVATDLKLWCRQQGHQLLRTLDQLLNQLVNVASEHQATVLPGYTHLQRAQPVTFAHWCLAYVEMIERDYSRLEDAINRLDTCPLGSGALAGTAYPMDREKLARNLGFQRATRNSLDSVSDRDHVMELMSIASISMLHLSRLAEDMIFYNSGESNFIELADTVTSGSSLMPQKKNPDALELIRGKCGRVYGAMAGMMMTVKALPLAYNKDMQEDKEGLFDALDSWSDCIEMAALCFEGIKINGERTLEAAKQGYANSTELADYLVAKGIPFREAHHIVGVAVVGAIEKGCALEELSLAELKAFSEVIEDDVYEILTIESCLAKRCALGGVAPEQVAYAVEQAGKRLQERDNAGVKVRPARLTDLDALEGMVAYWAGLGENLPRNRNELVRDIGSFAVAEHHGEVTGCASLYVYDSGLAEIRSLGVEAGWQSQGQGKAIVQHLVEKAREMAIKKVFVLTRVPEFFMKQDFIPTSRSLLPEKVLKDCDQCPRQHACDEVALEVNLQEQVIIKSSVA.

The interval Met1 to Val466 is argininosuccinate lyase. One can recognise an N-acetyltransferase domain in the interval Val464–Gln614. Residues Arg467–Ala624 are probable acetyltransferase.

It in the N-terminal section; belongs to the lyase 1 family. Argininosuccinate lyase subfamily.

It is found in the cytoplasm. The enzyme catalyses 2-(N(omega)-L-arginino)succinate = fumarate + L-arginine. It participates in amino-acid biosynthesis; L-arginine biosynthesis; L-arginine from L-ornithine and carbamoyl phosphate: step 3/3. The sequence is that of Bifunctional protein ArgH (argH) from Aliivibrio fischeri (strain ATCC 700601 / ES114) (Vibrio fischeri).